The chain runs to 151 residues: Probable transport accessory protein MmpS1 (151 aa).

2 helical membrane passes run 8–28 (FWIPMVIVIVVAVAAVTVSRL) and 81–101 (VVNAAVPWSFTIVTTLTAVVA).

The protein belongs to the MmpS family.

The protein localises to the cell membrane. This is Probable transport accessory protein MmpS1 (mmpS1) from Mycobacterium tuberculosis (strain CDC 1551 / Oshkosh).